Reading from the N-terminus, the 103-residue chain is Large ribosomal subunit protein uL23 (103 aa).

Belongs to the universal ribosomal protein uL23 family. As to quaternary structure, part of the 50S ribosomal subunit. Contacts protein L29, and trigger factor when it is bound to the ribosome.

In terms of biological role, one of the early assembly proteins it binds 23S rRNA. One of the proteins that surrounds the polypeptide exit tunnel on the outside of the ribosome. Forms the main docking site for trigger factor binding to the ribosome. The polypeptide is Large ribosomal subunit protein uL23 (Chlorobaculum tepidum (strain ATCC 49652 / DSM 12025 / NBRC 103806 / TLS) (Chlorobium tepidum)).